The primary structure comprises 309 residues: Ubiquitin-conjugating enzyme E2 32 (309 aa).

The UBC core domain maps to P11–H166. The Glycyl thioester intermediate role is filled by C93. Residues F275–I295 traverse the membrane as a helical segment.

Belongs to the ubiquitin-conjugating enzyme family.

Its subcellular location is the membrane. The enzyme catalyses S-ubiquitinyl-[E1 ubiquitin-activating enzyme]-L-cysteine + [E2 ubiquitin-conjugating enzyme]-L-cysteine = [E1 ubiquitin-activating enzyme]-L-cysteine + S-ubiquitinyl-[E2 ubiquitin-conjugating enzyme]-L-cysteine.. The protein operates within protein modification; protein ubiquitination. Its function is as follows. Accepts the ubiquitin from the E1 complex and catalyzes its covalent attachment to other proteins. This Arabidopsis thaliana (Mouse-ear cress) protein is Ubiquitin-conjugating enzyme E2 32 (UBC32).